We begin with the raw amino-acid sequence, 327 residues long: uncharacterized protein (327 aa).

Transmembrane regions (helical) follow at residues serine 68–proline 88, phenylalanine 92–phenylalanine 112, tryptophan 127–alanine 147, and isoleucine 148–leucine 168.

The protein localises to the cell membrane. May act as a negative regulator for the transcription of mutY, fabL, sspE and yfhP. This is an uncharacterized protein from Bacillus subtilis (strain 168).